A 256-amino-acid chain; its full sequence is Capsid protein (256 aa).

Residues 3–20 (KRPADIIISTPGSKVRRR) carry the Bipartite nuclear localization signal motif. Positions 40-54 (KRQSWTNRPINRKPR) match the Nuclear localization signal motif. Residues 68–85 (CEGPCKVQSFESRHDVVH) fold into a zinc finger. Positions 101 to 122 (LTHRVGKRFCVKSIYILGKIWM) match the Nuclear export signal motif. The short motif at 200–247 (RRFFRVNNYVVYNQQEAGKYENHTENALMLYMACTHASNPVYATLKIR) is the Bipartite nuclear localization signal element.

It belongs to the geminiviridae capsid protein family. As to quaternary structure, homomultimer. Binds to single-stranded and double-stranded viral DNA. Interacts (via nuclear localization signals) with host importin alpha-1a.

The protein localises to the virion. It is found in the host nucleus. In terms of biological role, encapsidates the viral DNA into characteristic twinned ('geminate') particles. Binds the genomic viral ssDNA and shuttles it into and out of the cell nucleus. The CP of bipartite geminiviruses is not required for cell-to-cell or systemic movement. This is Capsid protein from Manihot esculenta (Cassava).